A 304-amino-acid chain; its full sequence is Protein transport protein sec13 (304 aa).

WD repeat units lie at residues 12–51, 56–97, 102–143, 147–203, 211–253, and 259–298; these read GHDDMIHDAVLDYYGRRLATCSSDRTIKIFEIEGESQRLV, GHDG…WQRI, LHKA…WEHN, AHGL…NGYK, GHTD…PGEW, and NFDAAVWRVSWSLSGNVLAASSDNNKVTLWKENLKGEWEN.

Belongs to the WD repeat SEC13 family. In terms of assembly, the COPII coat is composed of at least 5 proteins: the sec23/24 complex, the sec13/31 complex, and the protein vtr-7/sar1. Component of the nuclear pore complex (NPC). NPC constitutes the exclusive means of nucleocytoplasmic transport. NPCs allow the passive diffusion of ions and small molecules and the active, nuclear transport receptor-mediated bidirectional transport of macromolecules such as proteins, RNAs, ribonucleoparticles (RNPs), and ribosomal subunits across the nuclear envelope. Due to its 8-fold rotational symmetry, all subunits are present with 8 copies or multiples thereof.

The protein resides in the cytoplasmic vesicle. It localises to the COPII-coated vesicle membrane. The protein localises to the endoplasmic reticulum membrane. Its subcellular location is the nucleus. It is found in the nuclear pore complex. Its function is as follows. Component of the coat protein complex II (COPII) which promotes the formation of transport vesicles from the endoplasmic reticulum (ER). The coat has two main functions, the physical deformation of the endoplasmic reticulum membrane into vesicles and the selection of cargo molecules. It also functions as a component of the nuclear pore complex (NPC). NPC components, collectively referred to as nucleoporins (NUPs), can play the role of both NPC structural components and of docking or interaction partners for transiently associated nuclear transport factors. Nup-20/sec13 is required for efficient mRNA export from the nucleus to the cytoplasm and for correct nuclear pore biogenesis and distribution. The protein is Protein transport protein sec13 (nup-20) of Neurospora crassa (strain ATCC 24698 / 74-OR23-1A / CBS 708.71 / DSM 1257 / FGSC 987).